A 365-amino-acid polypeptide reads, in one-letter code: Chorismate synthase (365 aa).

Arginine 47 contacts NADP(+). FMN contacts are provided by residues 124-126, glycine 287, 302-306, and arginine 328; these read RAS and KPTAT.

Belongs to the chorismate synthase family. Homotetramer. FMNH2 serves as cofactor.

The catalysed reaction is 5-O-(1-carboxyvinyl)-3-phosphoshikimate = chorismate + phosphate. It functions in the pathway metabolic intermediate biosynthesis; chorismate biosynthesis; chorismate from D-erythrose 4-phosphate and phosphoenolpyruvate: step 7/7. Catalyzes the anti-1,4-elimination of the C-3 phosphate and the C-6 proR hydrogen from 5-enolpyruvylshikimate-3-phosphate (EPSP) to yield chorismate, which is the branch point compound that serves as the starting substrate for the three terminal pathways of aromatic amino acid biosynthesis. This reaction introduces a second double bond into the aromatic ring system. The sequence is that of Chorismate synthase from Prochlorococcus marinus (strain MIT 9312).